The chain runs to 329 residues: Porphobilinogen deaminase (329 aa).

Cys250 is subject to S-(dipyrrolylmethanemethyl)cysteine.

Belongs to the HMBS family. In terms of assembly, monomer. The cofactor is dipyrromethane.

It carries out the reaction 4 porphobilinogen + H2O = hydroxymethylbilane + 4 NH4(+). It participates in porphyrin-containing compound metabolism; protoporphyrin-IX biosynthesis; coproporphyrinogen-III from 5-aminolevulinate: step 2/4. Its function is as follows. Tetrapolymerization of the monopyrrole PBG into the hydroxymethylbilane pre-uroporphyrinogen in several discrete steps. This Burkholderia pseudomallei (strain 668) protein is Porphobilinogen deaminase.